Consider the following 312-residue polypeptide: Ribosomal RNA small subunit methyltransferase H (312 aa).

Residues glycine 33 to histidine 35, aspartate 53, phenylalanine 80, aspartate 102, and glutamine 109 contribute to the S-adenosyl-L-methionine site.

The protein belongs to the methyltransferase superfamily. RsmH family.

It localises to the cytoplasm. The catalysed reaction is cytidine(1402) in 16S rRNA + S-adenosyl-L-methionine = N(4)-methylcytidine(1402) in 16S rRNA + S-adenosyl-L-homocysteine + H(+). Functionally, specifically methylates the N4 position of cytidine in position 1402 (C1402) of 16S rRNA. The protein is Ribosomal RNA small subunit methyltransferase H of Heliobacterium mobile (Heliobacillus mobilis).